The following is a 408-amino-acid chain: GPI transamidase component GAB1 homolog (408 aa).

Transmembrane regions (helical) follow at residues 9–29 (LLGL…TWIA), 66–86 (VFYQ…LGGI), 88–108 (VTRF…YLIA), 125–145 (PLWI…GIAC), 149–169 (MILN…SYAI), 207–227 (IFVV…FFLN), 266–286 (FFLF…SIRL), 303–323 (LFKA…LPIF), 339–359 (AIVF…TLGC), and 370–390 (LILA…LLLV). The may be involved in recognition of long-chain fatty acids in GPI stretch occupies residues 247–267 (PNLGLWWYFFTEMFNEFRTFF).

This sequence belongs to the PIGU family. In terms of assembly, forms a complex with PIG-S homolog, PIG-T homolog and GPI8.

It is found in the endoplasmic reticulum membrane. It participates in glycolipid biosynthesis; glycosylphosphatidylinositol-anchor biosynthesis. Functionally, component of the GPI transamidase complex. May be involved in the recognition of either the GPI attachment signal or the lipid portion of GPI. This is GPI transamidase component GAB1 homolog from Schizosaccharomyces pombe (strain 972 / ATCC 24843) (Fission yeast).